A 116-amino-acid chain; its full sequence is MRHQLRIPLLSKPADQRKALLRGLTTQLIREGRVTTTKARAKALRNEAERMISLAKDGSLASRRRAIGYIYDKKLVHSLFEKAKERYGDREGGYTRIVRTVSRKGDNAQMAIIELV.

Belongs to the bacterial ribosomal protein bL17 family. Part of the 50S ribosomal subunit. Contacts protein L32.

This is Large ribosomal subunit protein bL17 from Prochlorococcus marinus (strain MIT 9215).